The chain runs to 241 residues: Probable transcriptional regulatory protein CV_3123 (241 aa).

Belongs to the TACO1 family.

It is found in the cytoplasm. This is Probable transcriptional regulatory protein CV_3123 from Chromobacterium violaceum (strain ATCC 12472 / DSM 30191 / JCM 1249 / CCUG 213 / NBRC 12614 / NCIMB 9131 / NCTC 9757 / MK).